Here is a 4592-residue protein sequence, read N- to C-terminus: Intermembrane lipid transfer protein vps13D (4592 aa).

The 100-residue stretch at 3–102 (FESVVAEVID…SSTNVSSNYS (100 aa)) folds into the Chorein N-terminal domain. Disordered stretches follow at residues 95-142 (TNVS…TASQ), 157-199 (LDKK…IDSQ), 286-307 (STTS…SSSS), 445-529 (KKDD…IKGI), 574-605 (SNST…LSPM), 826-861 (NYNN…QQGI), 1040-1083 (TTSP…KRQW), 1219-1249 (YFKN…EKKP), 1655-1717 (QQQE…QQSN), 1855-1886 (SNNN…NSLF), 1971-2001 (TSSL…TTTS), 2025-2056 (PLIN…EQQQ), and 2245-2270 (NNNN…NIIN). Composition is skewed to low complexity over residues 117 to 139 (SSSN…TTST) and 172 to 199 (KSTN…IDSQ). Residues 437 to 517 (KNATIKLNKK…KKKEEKGKSK (81 aa)) adopt a coiled-coil conformation. Residues 445–457 (KKDDKKDDKKDDI) are compositionally biased toward basic and acidic residues. Low complexity predominate over residues 458 to 474 (NSSSSSIGSSNSSNNTP). Residues 475-529 (TKDKNKEKEKDKEKEKEKEKKKEKEKLKLEEKKKKKEEKGKSKSKDSKKNKIKGI) show a composition bias toward basic and acidic residues. Positions 574–591 (SNSTTTNNSNNNSSSSPN) are enriched in low complexity. Over residues 592–603 (ILATSPSNNSLS) the composition is skewed to polar residues. A compositionally biased stretch (low complexity) spans 829-838 (NQSSSSSSSS). The span at 1040-1059 (TTSPTFNSLNNKPSTLQNNH) shows a compositional bias: polar residues. Residues 1064-1076 (NGNSSNNNNTDSP) show a composition bias toward low complexity. Acidic residues predominate over residues 1234–1244 (NTEDDEQEEEE). Composition is skewed to low complexity over residues 1669–1689 (KSIN…LRKS) and 1702–1715 (QQQQ…QQQQ). A compositionally biased stretch (low complexity) spans 2037–2048 (SKSSSSKSSSSK). A TPR 1 repeat occupies 2321-2354 (TLQINDLGANIISIGNKSTSIKCFLRSIRLSDSR). Disordered stretches follow at residues 2456 to 2489 (KTNN…SIST), 2862 to 2882 (AVST…NNNG), 3006 to 3035 (GEQK…SSSS), 3106 to 3129 (NSSG…SSSN), 3356 to 3384 (KLPT…KRTT), 3560 to 3580 (NSLK…HRHN), and 3630 to 3679 (STNH…SKLK). Low complexity-rich tracts occupy residues 2458–2478 (NNNN…NNNN), 2864–2880 (STSN…SNNN), and 3015–3035 (TSTS…SSSS). Low complexity predominate over residues 3358–3384 (PTSPQTSSSSSPPPATTTTSTTTKRTT). A compositionally biased stretch (basic residues) spans 3569–3580 (KSKKQQQQHRHN). Residues 3640–3679 (SSTFNNSSNDNINNGNSNNNTSNSLSPPSSSSSINLSKLK) are compositionally biased toward low complexity. Residues 3789 to 3822 (EVPKPYLGRVDIKDNDTHTSIHFYDQDTEYSPFR) form a TPR 2 repeat. Composition is skewed to low complexity over residues 3872-3894 (TTTT…NNNN) and 4111-4135 (QQLQ…NPIN). Disordered stretches follow at residues 3872–3897 (TTTT…NQYI) and 4105–4135 (KKHK…NPIN).

It is found in the membrane. Its function is as follows. Mediates the transfer of lipids between membranes at organelle contact sites. This chain is Intermembrane lipid transfer protein vps13D (vps13D), found in Dictyostelium discoideum (Social amoeba).